The sequence spans 327 residues: GMP reductase (327 aa).

Cysteine 175 serves as the catalytic Thioimidate intermediate. Residue 204–227 coordinates NADP(+); the sequence is IIADGGIRTHGDIAKSIRFGASMV.

This sequence belongs to the IMPDH/GMPR family. GuaC type 2 subfamily.

The catalysed reaction is IMP + NH4(+) + NADP(+) = GMP + NADPH + 2 H(+). Functionally, catalyzes the irreversible NADPH-dependent deamination of GMP to IMP. It functions in the conversion of nucleobase, nucleoside and nucleotide derivatives of G to A nucleotides, and in maintaining the intracellular balance of A and G nucleotides. The sequence is that of GMP reductase from Exiguobacterium sp. (strain ATCC BAA-1283 / AT1b).